Reading from the N-terminus, the 280-residue chain is 3-methyl-2-oxobutanoate hydroxymethyltransferase (280 aa).

Mg(2+) contacts are provided by aspartate 61 and aspartate 100. 3-methyl-2-oxobutanoate contacts are provided by residues 61 to 62, aspartate 100, and lysine 130; that span reads DS. Mg(2+) is bound at residue glutamate 132. Glutamate 198 serves as the catalytic Proton acceptor.

Belongs to the PanB family. Homodecamer; pentamer of dimers. Mg(2+) is required as a cofactor.

It localises to the cytoplasm. It catalyses the reaction 3-methyl-2-oxobutanoate + (6R)-5,10-methylene-5,6,7,8-tetrahydrofolate + H2O = 2-dehydropantoate + (6S)-5,6,7,8-tetrahydrofolate. Its pathway is cofactor biosynthesis; (R)-pantothenate biosynthesis; (R)-pantoate from 3-methyl-2-oxobutanoate: step 1/2. In terms of biological role, catalyzes the reversible reaction in which hydroxymethyl group from 5,10-methylenetetrahydrofolate is transferred onto alpha-ketoisovalerate to form ketopantoate. The protein is 3-methyl-2-oxobutanoate hydroxymethyltransferase of Mycolicibacterium vanbaalenii (strain DSM 7251 / JCM 13017 / BCRC 16820 / KCTC 9966 / NRRL B-24157 / PYR-1) (Mycobacterium vanbaalenii).